Consider the following 245-residue polypeptide: UPF0246 protein Ldb2075 (245 aa).

Belongs to the UPF0246 family.

This is UPF0246 protein Ldb2075 from Lactobacillus delbrueckii subsp. bulgaricus (strain ATCC 11842 / DSM 20081 / BCRC 10696 / JCM 1002 / NBRC 13953 / NCIMB 11778 / NCTC 12712 / WDCM 00102 / Lb 14).